Here is an 84-residue protein sequence, read N- to C-terminus: ATP synthase subunit c (84 aa).

A run of 2 helical transmembrane segments spans residues isoleucine 9 to isoleucine 29 and isoleucine 54 to isoleucine 74.

The protein belongs to the ATPase C chain family. As to quaternary structure, F-type ATPases have 2 components, F(1) - the catalytic core - and F(0) - the membrane proton channel. F(1) has five subunits: alpha(3), beta(3), gamma(1), delta(1), epsilon(1). F(0) has three main subunits: a(1), b(2) and c(10-14). The alpha and beta chains form an alternating ring which encloses part of the gamma chain. F(1) is attached to F(0) by a central stalk formed by the gamma and epsilon chains, while a peripheral stalk is formed by the delta and b chains.

Its subcellular location is the cell inner membrane. Its function is as follows. F(1)F(0) ATP synthase produces ATP from ADP in the presence of a proton or sodium gradient. F-type ATPases consist of two structural domains, F(1) containing the extramembraneous catalytic core and F(0) containing the membrane proton channel, linked together by a central stalk and a peripheral stalk. During catalysis, ATP synthesis in the catalytic domain of F(1) is coupled via a rotary mechanism of the central stalk subunits to proton translocation. Functionally, key component of the F(0) channel; it plays a direct role in translocation across the membrane. A homomeric c-ring of between 10-14 subunits forms the central stalk rotor element with the F(1) delta and epsilon subunits. The protein is ATP synthase subunit c of Glaesserella parasuis serovar 5 (strain SH0165) (Haemophilus parasuis).